A 485-amino-acid polypeptide reads, in one-letter code: MLDLNLDVDSTESTQNERDSITVKGVSLNQMDESVTSNSSVVNAEASSCIDGEDELCSTRTVKFQFEILKGGGEEEEEDDDERSAVMMTKEFFPVAKGMNFMDSSAQSSRSTVDISFQRGKQGGDFIGSGSGGGDASRVMQPPSQPVKKSRRGPRSKSSQYRGVTFYRRTGRWESHIWDCGKQVYLGGFDTAHAAARAYDRAAVKFRGLEADINFVIGDYEEDLKQMANLSKEEVVQVLRRQSSGFSRNNSRYQGVALQKIGGWGAQMEQLHGNMGCDKAAVQWKGREAASLIEPHASRMIPEAANVKLDLNLGISLSLGDGPKQKDRALRLHHVPNNSVCGRNTMMENHMAAAACDTPFNFLKRGSDHLNNRHALPSAFFSPMERTPEKGLMLRSHQSFPARTWQGHDQSSGGTAVAATAPPLFSNAASSGFSLSATRPPSSTAIHHPSQPFVNLNQPGLYVIHPSDYISQHQHNLMNRPQPPP.

Residues 124-135 (GDFIGSGSGGGD) are compositionally biased toward gly residues. A disordered region spans residues 124-161 (GDFIGSGSGGGDASRVMQPPSQPVKKSRRGPRSKSSQY). Residues 160-216 (QYRGVTFYRRTGRWESHIWDCGKQVYLGGFDTAHAAARAYDRAAVKFRGLEADINFV) constitute a DNA-binding region (AP2/ERF).

Belongs to the AP2/ERF transcription factor family. AP2 subfamily.

Its subcellular location is the nucleus. In terms of biological role, probably acts as a transcriptional activator. Binds to the GCC-box pathogenesis-related promoter element. May be involved in the regulation of gene expression by stress factors and by components of stress signal transduction pathways. Regulates negatively the transition to flowering time and confers flowering time delay. The protein is AP2-like ethylene-responsive transcription factor TOE2 (TOE2) of Arabidopsis thaliana (Mouse-ear cress).